Consider the following 408-residue polypeptide: L-lactate oxidase (408 aa).

An FMN hydroxy acid dehydrogenase domain is found at 14–370; that stretch reads NEAIKMVNVD…KHADIRQINY (357 aa). A pyruvate-binding site is contributed by Tyr-40. Residues 93–95, Ser-122, and Gln-144 each bind FMN; that span reads PIA. A pyruvate-binding site is contributed by Tyr-146. Thr-172 is an FMN binding site. Pyruvate is bound at residue Arg-181. FMN-binding residues include Lys-241 and Ser-263. Pyruvate-binding residues include His-265 and Arg-268. His-265 (proton acceptor) is an active-site residue. FMN-binding positions include 296–300 and Arg-320; that span reads DSGVR.

This sequence belongs to the FMN-dependent alpha-hydroxy acid dehydrogenase family. In terms of assembly, homotetramer. FMN is required as a cofactor.

The catalysed reaction is a (2S)-2-hydroxycarboxylate + O2 = a 2-oxocarboxylate + H2O2. It carries out the reaction (S)-lactate + O2 = pyruvate + H2O2. It catalyses the reaction 2-hydroxyoctanoate + O2 = 2-oxooctanoate + H2O2. The enzyme catalyses glycolate + O2 = glyoxylate + H2O2. The catalysed reaction is mandelate + O2 = phenylglyoxylate + H2O2. It carries out the reaction 2-hydroxyoctadecanoate + O2 = 2-oxooctadecanoate + H2O2. In terms of biological role, oxidase that catalyzes the oxidation of a broad range of 2-hydroxyacids in vitro, such as (S)-lactate, 2-hydroxyoctanoate, and to a lesser extent glycolate, mandelate and 2-hydroxyoctadecanoate, to the corresponding 2-oxoacids, with a reduction of O2 to H2O2. May be involved in the utilization of L-lactate as an energy source for growth. This is L-lactate oxidase from Lactobacillus jensenii.